Reading from the N-terminus, the 201-residue chain is 3-isopropylmalate dehydratase small subunit (201 aa).

This sequence belongs to the LeuD family. LeuD type 1 subfamily. In terms of assembly, heterodimer of LeuC and LeuD.

The enzyme catalyses (2R,3S)-3-isopropylmalate = (2S)-2-isopropylmalate. It functions in the pathway amino-acid biosynthesis; L-leucine biosynthesis; L-leucine from 3-methyl-2-oxobutanoate: step 2/4. In terms of biological role, catalyzes the isomerization between 2-isopropylmalate and 3-isopropylmalate, via the formation of 2-isopropylmaleate. The polypeptide is 3-isopropylmalate dehydratase small subunit (Nitrobacter winogradskyi (strain ATCC 25391 / DSM 10237 / CIP 104748 / NCIMB 11846 / Nb-255)).